Here is a 215-residue protein sequence, read N- to C-terminus: Large ribosomal subunit protein uL1 (215 aa).

This sequence belongs to the universal ribosomal protein uL1 family. In terms of assembly, part of the 50S ribosomal subunit.

In terms of biological role, binds directly to 23S rRNA. Probably involved in E site tRNA release. Protein L1 is also a translational repressor protein, it controls the translation of its operon by binding to its mRNA. In Staphylothermus marinus (strain ATCC 43588 / DSM 3639 / JCM 9404 / F1), this protein is Large ribosomal subunit protein uL1.